Reading from the N-terminus, the 320-residue chain is Olfactory receptor 2W1 (320 aa).

Residues 1–25 are Extracellular-facing; it reads MDQSNYSSLHGFILLGFSNHPKMEM. Residue Asn-5 is glycosylated (N-linked (GlcNAc...) asparagine). The chain crosses the membrane as a helical span at residues 26–49; it reads ILSGVVAIFYLITLVGNTAIILAS. Residues 50 to 57 lie on the Cytoplasmic side of the membrane; it reads LLDSQLHT. A helical membrane pass occupies residues 58-79; the sequence is PMYFFLRNLSFLDLCFTTSIIP. The Extracellular segment spans residues 80 to 100; that stretch reads QMLVNLWGPDKTISYVGCIIQ. The cysteines at positions 97 and 189 are disulfide-linked. Residues 101–120 form a helical membrane-spanning segment; sequence LYVYMWLGSVECLLLAVMSY. Residues 121–139 lie on the Cytoplasmic side of the membrane; the sequence is DRFTAICKPLHYFVVMNPH. A helical transmembrane segment spans residues 140–158; the sequence is LCLKMIIMIWSISLANSVV. The Extracellular portion of the chain corresponds to 159–195; it reads LCTLTLNLPTCGNNILDHFLCELPALVKIACVDTTTV. A helical transmembrane segment spans residues 196–219; the sequence is EMSVFALGIIIVLTPLILILISYG. The Cytoplasmic segment spans residues 220–236; it reads YIAKAVLRTKSKASQRK. Residues 237-259 traverse the membrane as a helical segment; sequence AMNTCGSHLTVVSMFYGTIIYMY. Residues 260-272 lie on the Extracellular side of the membrane; sequence LQPGNRASKDQGK. The helical transmembrane segment at 273–292 threads the bilayer; the sequence is FLTLFYTVITPSLNPLIYTL. At 293–320 the chain is on the cytoplasmic side; that stretch reads RNKDMKDALKKLMRFHHKSTKIKRNCKS.

This sequence belongs to the G-protein coupled receptor 1 family.

It localises to the cell membrane. In terms of biological role, odorant receptor. The chain is Olfactory receptor 2W1 (OR2W1) from Homo sapiens (Human).